A 226-amino-acid polypeptide reads, in one-letter code: Ribonuclease 3 (226 aa).

The region spanning 6–128 (INRLQRKLGY…LIGGIFLDSD (123 aa)) is the RNase III domain. Glu-41 contacts Mg(2+). Asp-45 is a catalytic residue. Mg(2+) contacts are provided by Asp-114 and Glu-117. The active site involves Glu-117. The 71-residue stretch at 155–225 (DPKTRLQEFL…AEQALKKLEL (71 aa)) folds into the DRBM domain.

Belongs to the ribonuclease III family. Homodimer. Mg(2+) is required as a cofactor.

Its subcellular location is the cytoplasm. It carries out the reaction Endonucleolytic cleavage to 5'-phosphomonoester.. Its function is as follows. Digests double-stranded RNA. Involved in the processing of primary rRNA transcript to yield the immediate precursors to the large and small rRNAs (23S and 16S). Processes some mRNAs, and tRNAs when they are encoded in the rRNA operon. Processes pre-crRNA and tracrRNA of type II CRISPR loci if present in the organism. The chain is Ribonuclease 3 from Pectobacterium carotovorum subsp. carotovorum (strain PC1).